A 390-amino-acid polypeptide reads, in one-letter code: DNA replication and repair protein RecF (390 aa).

Residue 30-37 (GDNAQGKS) participates in ATP binding.

Belongs to the RecF family.

The protein resides in the cytoplasm. In terms of biological role, the RecF protein is involved in DNA metabolism; it is required for DNA replication and normal SOS inducibility. RecF binds preferentially to single-stranded, linear DNA. It also seems to bind ATP. In Trichodesmium erythraeum (strain IMS101), this protein is DNA replication and repair protein RecF.